Consider the following 186-residue polypeptide: ADP-ribosylation factor-like protein 8B (186 aa).

Positions Met-1–Glu-19 form an intramembrane region, note=Mediates targeting to membranes. GTP-binding positions include Gln-29–Thr-35, Asp-71–Gln-75, and Asn-130–Asp-133. Lys-141 is covalently cross-linked (Glycyl lysine isopeptide (Lys-Gly) (interchain with G-Cter in ubiquitin)).

The protein belongs to the small GTPase superfamily. Arf family. As to quaternary structure, interacts with tubulin. Interacts with BORCS5; recruits ARL8B to lysosomes. Interacts with VPS41; the interaction mediates the recruitment of the HOPS complex to lysosomes. Interacts (GTP-bound form) with PLEKHM2 (via RUN domain); the interaction is required to recruit the motor protein kinesin-1 on lysosomes. Interacts (GTP-bound form) with PLEKHM1 (via RUN domain); the interaction is required for PLEKHM1 localization to lysosomes and for ARL8B function in delivery and degradation of endocytic and autophagic cargo in lysosomes. PLEKHM1 and PLEKHM2 compete for interaction with ARL8B. Interacts (GTP-bound form) with RUFY1; the interaction is required for RUFY1 endosomal location. When GTP-bound, interacts with RUFY3 and RUFY4, but not with RUFY1, nor RUFY2. In terms of processing, ubiquitinated at Lys-141 by RNF167, leading to its degradation.

Its subcellular location is the late endosome membrane. It localises to the lysosome membrane. The protein localises to the cytoplasm. The protein resides in the cytoskeleton. It is found in the spindle. Its subcellular location is the cell projection. It localises to the axon. The protein localises to the synapse. The protein resides in the cytolytic granule membrane. It is found in the early endosome membrane. It catalyses the reaction GTP + H2O = GDP + phosphate + H(+). In terms of biological role, small GTPase which cycles between active GTP-bound and inactive GDP-bound states. In its active state, binds to a variety of effector proteins playing a key role in the regulation of lysosomal positioning which is important for nutrient sensing, natural killer cell-mediated cytotoxicity and antigen presentation. Along with its effectors, orchestrates lysosomal transport and fusion. Localizes specifically to lysosomal membranes and mediates anterograde lysosomal motility by recruiting PLEKHM2, which in turn recruits the motor protein kinesin-1 on lysosomes. Required for lysosomal and cytolytic granule exocytosis. Critical factor involved in NK cell-mediated cytotoxicity. Drives the polarization of cytolytic granules and microtubule-organizing centers (MTOCs) toward the immune synapse between effector NK lymphocytes and target cells. In neurons, mediates the anterograde axonal long-range transport of presynaptic lysosome-related vesicles required for presynaptic biogenesis and synaptic function. Also acts as a regulator of endosome to lysosome trafficking pathways of special significance for host defense. Recruits RUFY1 onto early endosomes regulating endosomes to trans-Golgi network proteins retrieval. Regulates cargo trafficking to lysosomes by binding to PLEKHM1 and recruiting the HOPS subunit VPS41, resulting in functional assembly of the HOPS complex on lysosomal membranes. Plays an important role in cargo delivery to lysosomes for antigen presentation and microbial killing. Directs the intersection of CD1d with lipid antigens in lysosomes, and plays a role in intersecting phagosomes with lysosomes to generate phagolysosomes that kill microbes. Involved in the process of MHC II presentation. Regulates the delivery of antigens to lysosomes and the formation of MHC II-peptide complexes through the recruitment of the HOPS complex to lysosomes allowing the fusion of late endosomes to lysosomes. May play a role in chromosome segregation. The sequence is that of ADP-ribosylation factor-like protein 8B (ARL8B) from Pongo abelii (Sumatran orangutan).